A 251-amino-acid polypeptide reads, in one-letter code: Appressoria-specific virulence factor GAS1 (251 aa).

The signal sequence occupies residues 1–21 (MSLKSLIAATILAAPLVAGHG). The segment at 40-76 (VTSTPRDGTRRDPFQQDSTRFKGQQADTFGETVGGGQ) is disordered. Polar residues predominate over residues 54–66 (QQDSTRFKGQQAD).

It is found in the cytoplasm. Appressoria-specific virulence factor required for appressorial penetration in host and lesion development. The chain is Appressoria-specific virulence factor GAS1 from Pyricularia oryzae (strain 70-15 / ATCC MYA-4617 / FGSC 8958) (Rice blast fungus).